Reading from the N-terminus, the 97-residue chain is Small ribosomal subunit protein bS6 (97 aa).

This sequence belongs to the bacterial ribosomal protein bS6 family.

Functionally, binds together with bS18 to 16S ribosomal RNA. In Listeria monocytogenes serotype 4b (strain CLIP80459), this protein is Small ribosomal subunit protein bS6.